Consider the following 227-residue polypeptide: MGFGDLKSPAGLKVLKEFLADKSYIEGYVPSQADVAVFDALSAAPPADLFHALRWYNHIKSYEKQKSSLPGVKKALGNYGPVNIEDTTGSAAKETKEEDDDDIDLFGSDDEEESEDAKRVRDERLAQYEAKKSKKPTLIAKSSILLDVKPWDDETDMGKLEECLRSIQMDGLLWGSSKLVPVGYGIKKLQIQCVVEDDKVGTDVLEEKITAFEDFVQSMDVAAFNKI.

In terms of domain architecture, GST C-terminal spans 2–90 (GFGDLKSPAG…PVNIEDTTGS (89 aa)). The interval 83 to 120 (NIEDTTGSAAKETKEEDDDDIDLFGSDDEEESEDAKRV) is disordered. Residues 97 to 115 (EEDDDDIDLFGSDDEEESE) are compositionally biased toward acidic residues. Position 108 is a phosphoserine; by CK2 (Ser-108).

The protein belongs to the EF-1-beta/EF-1-delta family. As to quaternary structure, EF-1 is composed of 4 subunits: alpha, beta (alpha subunit of the eEF1B subcomplex), delta (beta subunit of the eEF1B subcomplex), and gamma (gamma subunit of the eEF1B subcomplex). Interacts with elongation factor EEF1A1. Post-translationally, phosphorylation affects the GDP/GTP exchange rate.

In terms of biological role, catalytic subunit of the guanine nucleotide exchange factor (GEF) (eEF1B subcomplex) of the eukaryotic elongation factor 1 complex (eEF1). Stimulates the exchange of GDP for GTP on elongation factor 1A (eEF1A), probably by displacing GDP from the nucleotide binding pocket in eEF1A. The chain is Elongation factor 1-beta (eef1b) from Xenopus laevis (African clawed frog).